The following is a 321-amino-acid chain: Cytochrome c biogenesis protein CcsA (321 aa).

The next 7 membrane-spanning stretches (helical) occupy residues 9 to 29 (ILTH…LITL), 44 to 64 (GMIA…ASSG), 68 to 88 (LSNL…LHMI), 143 to 163 (MLLS…LLMI), 226 to 246 (VISL…VWAN), 260 to 274 (TWAF…IYLH), and 289 to 309 (VASI…LLGI).

The protein belongs to the CcmF/CycK/Ccl1/NrfE/CcsA family. May interact with Ccs1.

It is found in the plastid. The protein localises to the chloroplast thylakoid membrane. In terms of biological role, required during biogenesis of c-type cytochromes (cytochrome c6 and cytochrome f) at the step of heme attachment. This chain is Cytochrome c biogenesis protein CcsA, found in Oryza sativa subsp. indica (Rice).